Reading from the N-terminus, the 363-residue chain is MTLSSEREAAKAAFLSANGFGDVRRESLGGDASTRAYERLHRGEQSYIFMDQPPSLETAPCPPDASPAERAALGYNALARLAAGRVDAFVACAGWLNAQGLSAPKVLAADPAAGLAVLEDLGDDLYARLIEAGTDEAPLYDAAIDGLLAIHAAPTPKVLRYDGSTWPLLTYDDLALKTAHDIFVEWQPRFRDISFDAAALAEWEAIWAPIRAKGEADATVFCHRDYHAENLIWLPERDGAARVGMLDFQDAVLAHPAWDLSMLLHDARRTVSPEREAACLDRYLAARPELDRTAFLAGYHALGALNIIRILGIFARLVTRDGKPRYADFIPRLWVYLDVCFADPALAELKAWFDRYVPVETRR.

Belongs to the kinase AmgK family.

It catalyses the reaction N-acetyl-D-muramate + ATP = N-acetyl-alpha-D-muramate 1-phosphate + ADP + H(+). The enzyme catalyses N-acetyl-D-glucosamine + ATP = N-acetyl-alpha-D-glucosamine 1-phosphate + ADP + H(+). It functions in the pathway cell wall biogenesis; peptidoglycan recycling. Sugar kinase that catalyzes the ATP-dependent phosphorylation of N-acetylmuramate (MurNAc) and N-acetylglucosamine (GlcNAc) at its C1 hydroxyl group, leading to MurNAc alpha-1P and GlcNAc alpha-1P, respectively. Is likely involved in peptidoglycan recycling as part of a cell wall recycling pathway that bypasses de novo biosynthesis of the peptidoglycan precursor UDP-MurNAc. Is able to complement the fosfomycin sensitivity phenotype of a P.putida mutant lacking amgK. The protein is N-acetylmuramate/N-acetylglucosamine kinase of Caulobacter vibrioides (strain ATCC 19089 / CIP 103742 / CB 15) (Caulobacter crescentus).